Reading from the N-terminus, the 139-residue chain is Large-conductance mechanosensitive channel (139 aa).

A run of 2 helical transmembrane segments spans residues 9–29 (AFAV…GAAF) and 79–99 (IQTV…VKAI).

Belongs to the MscL family. In terms of assembly, homopentamer.

Its subcellular location is the cell inner membrane. Functionally, channel that opens in response to stretch forces in the membrane lipid bilayer. May participate in the regulation of osmotic pressure changes within the cell. The protein is Large-conductance mechanosensitive channel of Pseudomonas putida (strain W619).